The sequence spans 853 residues: Auxin response factor 23 (853 aa).

The interval 118 to 141 is disordered; that stretch reads PESKQQEDNGSTEEEVPSAPAAGH. A DNA-binding region (TF-B3) is located at residues 149 to 251; that stretch reads FCKTLTASDT…ELRVGVRRAM (103 aa). Disordered regions lie at residues 422–484 and 647–723; these read ESEP…RMQM and PAKS…QGVS. Polar residues predominate over residues 425–455; it reads PNGTQRTFQTQENATPKSGFGNSSELESAQK. The span at 672 to 686 shows a compositional bias: basic and acidic residues; that stretch reads EWRRPDVTEVEKCSD. Positions 706 to 723 are enriched in polar residues; the sequence is PSSQQASRNMSCKSQGVS. In terms of domain architecture, PB1 spans 725-809; it reads RSCKKVHKQG…HKIFIYTREE (85 aa). The tract at residues 815 to 853 is disordered; sequence PGTLNSRSEDSHANSMERGSVGREMRGCLSTSSLNSENC. Polar residues predominate over residues 843-853; it reads LSTSSLNSENC.

It belongs to the ARF family. Homodimers and heterodimers. Interacts with CRL1. In terms of tissue distribution, expressed in roots, culms, leaves and young panicles.

It localises to the nucleus. Functionally, auxin response factors (ARFs) are transcriptional factors that bind specifically to the DNA sequence 5'-TGTCTC-3' found in the auxin-responsive promoter elements (AuxREs). The chain is Auxin response factor 23 (ARF23) from Oryza sativa subsp. japonica (Rice).